A 417-amino-acid chain; its full sequence is MEKLKITGNGPLKGDITVSGAKNAALPILCASLLTADTLRLTNVPQLRDVMTTQKLLQGMGARVMTDNVHEFELSAAQVSDTCAPYELVKTMRASILVLGPTLARFGEASVSLPGGCAIGSRPVDQHIKGLAAMGADIVIEHGYVKARGRLKGARVVMDMVTVTGTENLLMAATLADGTTVLENAAREPEVTDLAVCLNKMGARISGLGTDRLVIEGVERLHGAEHAVMPDRIEAGTFLVAGAMTQGKLVLRNARAADMGAILDKLAEAGAVIEAGDDWIALDMPQRPRAVSLRTLPYPAFPTDMQAQFMAMNCIAEGVGSIKETIFENRFMHVPELIRMGARIDVEGNLATTHGVNKLSGATVMATDLRASASLVLAGLVADGTTIVDRIYHLDRGYEHIERKLGAVGAQIERTGG.

Position 22–23 (22–23) interacts with phosphoenolpyruvate; sequence KN. A UDP-N-acetyl-alpha-D-glucosamine-binding site is contributed by Arg93. Residue Cys117 is the Proton donor of the active site. Residue Cys117 is modified to 2-(S-cysteinyl)pyruvic acid O-phosphothioketal. UDP-N-acetyl-alpha-D-glucosamine is bound by residues 122 to 126, Asp304, and Ile326; that span reads RPVDQ.

It belongs to the EPSP synthase family. MurA subfamily.

It localises to the cytoplasm. The enzyme catalyses phosphoenolpyruvate + UDP-N-acetyl-alpha-D-glucosamine = UDP-N-acetyl-3-O-(1-carboxyvinyl)-alpha-D-glucosamine + phosphate. It participates in cell wall biogenesis; peptidoglycan biosynthesis. Cell wall formation. Adds enolpyruvyl to UDP-N-acetylglucosamine. The polypeptide is UDP-N-acetylglucosamine 1-carboxyvinyltransferase (Laribacter hongkongensis (strain HLHK9)).